Consider the following 812-residue polypeptide: Mitochondrial intermediate peptidase (812 aa).

The transit peptide at 1–35 (MLKLLRPRPWVCNSCLNRVAFPKPYPVGSRSTRWL) directs the protein to the mitochondrion. The tract at residues 518-544 (STSEGGPAFGSPESAANDGMAASRGAS) is disordered. His-587 lines the Zn(2+) pocket. Glu-588 is a catalytic residue. Residues His-591 and His-594 each coordinate Zn(2+).

It belongs to the peptidase M3 family. Zn(2+) serves as cofactor.

It localises to the mitochondrion matrix. It catalyses the reaction Release of an N-terminal octapeptide as second stage of processing of some proteins imported into the mitochondrion.. In terms of biological role, cleaves proteins, imported into the mitochondrion, to their mature size. While most mitochondrial precursor proteins are processed to the mature form in one step by mitochondrial processing peptidase (MPP), the sequential cleavage by MIP of an octapeptide after initial processing by MPP is a required step for a subgroup of nuclear-encoded precursor proteins destined for the matrix or the inner membrane. The polypeptide is Mitochondrial intermediate peptidase (OCT1) (Pyricularia oryzae (strain 70-15 / ATCC MYA-4617 / FGSC 8958) (Rice blast fungus)).